A 256-amino-acid chain; its full sequence is uncharacterized protein (256 aa).

A signal peptide spans 1–24 (MIKRVNKLVLGISLLFLVISITAG). The N-palmitoyl cysteine moiety is linked to residue cysteine 25. Cysteine 25 is lipidated: S-diacylglycerol cysteine.

Belongs to the staphylococcal tandem lipoprotein family.

Its subcellular location is the cell membrane. This is an uncharacterized protein from Staphylococcus aureus (strain NCTC 8325 / PS 47).